Reading from the N-terminus, the 380-residue chain is Flap endonuclease 1 (380 aa).

Positions 1–104 (MGIHGLTKLI…AELEKRGEKR (104 aa)) are N-domain. Residue D34 coordinates Mg(2+). The DNA site is built by R47 and R70. Mg(2+) is bound by residues D86, E158, E160, D179, and D181. Residues 122 to 253 (NIDKFSKRLV…KRAIDLIKQH (132 aa)) form an I-domain region. A DNA-binding site is contributed by E158. 2 residues coordinate DNA: G231 and D233. Position 233 (D233) interacts with Mg(2+). The interval 336-344 (TQGRLDSFF) is interaction with PCNA. The tract at residues 351–380 (SSKRKEPELKGSAKKKQKTGATPGKFKKGK) is disordered.

This sequence belongs to the XPG/RAD2 endonuclease family. FEN1 subfamily. In terms of assembly, interacts with PCNA. Three molecules of fen1 bind to one PCNA trimer with each molecule binding to one PCNA monomer. PCNA stimulates the nuclease activity without altering cleavage specificity. Mg(2+) serves as cofactor. In terms of processing, phosphorylated. Phosphorylation upon DNA damage induces relocalization to the nuclear plasma.

The protein localises to the nucleus. The protein resides in the nucleolus. Its subcellular location is the nucleoplasm. It localises to the mitochondrion. Its function is as follows. Structure-specific nuclease with 5'-flap endonuclease and 5'-3' exonuclease activities involved in DNA replication and repair. During DNA replication, cleaves the 5'-overhanging flap structure that is generated by displacement synthesis when DNA polymerase encounters the 5'-end of a downstream Okazaki fragment. It enters the flap from the 5'-end and then tracks to cleave the flap base, leaving a nick for ligation. Also involved in the long patch base excision repair (LP-BER) pathway, by cleaving within the apurinic/apyrimidinic (AP) site-terminated flap. Acts as a genome stabilization factor that prevents flaps from equilibrating into structures that lead to duplications and deletions. Also possesses 5'-3' exonuclease activity on nicked or gapped double-stranded DNA, and exhibits RNase H activity. Also involved in replication and repair of rDNA and in repairing mitochondrial DNA. This Anoplopoma fimbria (Sablefish) protein is Flap endonuclease 1 (fen1).